The primary structure comprises 449 residues: Exodeoxyribonuclease 7 large subunit (449 aa).

The protein belongs to the XseA family. As to quaternary structure, heterooligomer composed of large and small subunits.

The protein localises to the cytoplasm. It carries out the reaction Exonucleolytic cleavage in either 5'- to 3'- or 3'- to 5'-direction to yield nucleoside 5'-phosphates.. Functionally, bidirectionally degrades single-stranded DNA into large acid-insoluble oligonucleotides, which are then degraded further into small acid-soluble oligonucleotides. This Salmonella typhi protein is Exodeoxyribonuclease 7 large subunit.